We begin with the raw amino-acid sequence, 443 residues long: Tol-Pal system protein TolB (443 aa).

The signal sequence occupies residues 1-33 (MKIGIINTKIRTVFSAFACMIAASLVCTMPARA).

This sequence belongs to the TolB family. In terms of assembly, the Tol-Pal system is composed of five core proteins: the inner membrane proteins TolA, TolQ and TolR, the periplasmic protein TolB and the outer membrane protein Pal. They form a network linking the inner and outer membranes and the peptidoglycan layer.

Its subcellular location is the periplasm. Its function is as follows. Part of the Tol-Pal system, which plays a role in outer membrane invagination during cell division and is important for maintaining outer membrane integrity. In Brucella anthropi (strain ATCC 49188 / DSM 6882 / CCUG 24695 / JCM 21032 / LMG 3331 / NBRC 15819 / NCTC 12168 / Alc 37) (Ochrobactrum anthropi), this protein is Tol-Pal system protein TolB.